Reading from the N-terminus, the 229-residue chain is 2,3-bisphosphoglycerate-dependent phosphoglycerate mutase (229 aa).

Substrate is bound by residues 8–15 (RHGKSEWN), 21–22 (TG), R60, 87–90 (ERHY), K98, 114–115 (RR), and 183–184 (GN). The Tele-phosphohistidine intermediate role is filled by H9. E87 functions as the Proton donor/acceptor in the catalytic mechanism.

This sequence belongs to the phosphoglycerate mutase family. BPG-dependent PGAM subfamily. As to quaternary structure, homodimer.

It catalyses the reaction (2R)-2-phosphoglycerate = (2R)-3-phosphoglycerate. Its pathway is carbohydrate degradation; glycolysis; pyruvate from D-glyceraldehyde 3-phosphate: step 3/5. Its function is as follows. Catalyzes the interconversion of 2-phosphoglycerate and 3-phosphoglycerate. The chain is 2,3-bisphosphoglycerate-dependent phosphoglycerate mutase from Nautilia profundicola (strain ATCC BAA-1463 / DSM 18972 / AmH).